Consider the following 30-residue polypeptide: Cyclotide cter-Q (30 aa).

The segment at residues 1-30 (GIPCGESCVFIPCISTVIGCSCKNKVCYRN) is a cross-link (cyclopeptide (Gly-Asn)). Disulfide bonds link Cys4–Cys20, Cys8–Cys22, and Cys13–Cys27.

This is a cyclic peptide.

The protein localises to the secreted. Functionally, probably participates in a plant defense mechanism. This chain is Cyclotide cter-Q, found in Clitoria ternatea (Butterfly pea).